We begin with the raw amino-acid sequence, 112 residues long: MDINQNLGNLMKEAQKMQQRMQEAQQQLSQLVVSGESGGGMVTIKMNGRHDVTEVKIKPTLMDEDIEMLEDLIAAAVNDAVRKIEKASKEKISQLTAGLNIPTDLMGGKEGE.

Belongs to the YbaB/EbfC family. Homodimer.

It localises to the cytoplasm. The protein localises to the nucleoid. Functionally, binds to DNA and alters its conformation. May be involved in regulation of gene expression, nucleoid organization and DNA protection. In Legionella pneumophila (strain Paris), this protein is Nucleoid-associated protein lpp2803.